Consider the following 413-residue polypeptide: Paxillin homolog 1 (413 aa).

Basic and acidic residues predominate over residues 33-45 (HISDRRSQSRDDF). The tract at residues 33-157 (HISDRRSQSR…PLHSDSMIGT (125 aa)) is disordered. The span at 49 to 69 (YDLQGNLNTQSVSNGNITTSP) shows a compositional bias: polar residues. The segment covering 73-92 (RSSEGKDYSKSQERIYENES) has biased composition (basic and acidic residues). Positions 118 to 143 (ASSSRKSLGPPSQAQSYSDVRSNGRS) are enriched in polar residues. 4 LIM zinc-binding domains span residues 174-232 (GDCA…NQFS), 233-292 (PKCQ…LFAP), 293-350 (KCNG…ESRG), and 351-410 (SICS…TYAL).

Belongs to the paxillin family. As to expression, isoform a: Expressed in all 95 body wall muscle cells as well as in the pharyngeal muscle cells (at protein level). Isoform c: Expressed in the body wall muscle cells and in the pharyngeal muscle cells.

It is found in the cell junction. It localises to the adherens junction. The protein localises to the cell membrane. Its subcellular location is the cytoplasm. The protein resides in the myofibril. It is found in the sarcomere. It localises to the m line. The protein localises to the cell projection. Its subcellular location is the podosome. Its function is as follows. Required for myofilament organization of the pharyngeal sarcomeres and for pharyngeal muscle contractions and hence for pharyngeal pumping. Together with lin-8, might be required for myofilament organization in the body wall muscles. The sequence is that of Paxillin homolog 1 (pxl-1) from Caenorhabditis elegans.